The chain runs to 528 residues: Na(+)/H(+) antiporter NhaB (528 aa).

11 helical membrane passes run 10-30 (IGNFLGNSPKWYKIAILSFLI), 63-83 (YPLQPGGLLAIEAVAIGMTSA), 96-116 (VLLLLVFMVAGIYFMKQLLLF), 131-165 (VSLMFCLTSAFLSAFLDALTVIAVIIAVAVGFYAI), 204-224 (LLMHAGVGTALGGVCTMVGEP), 240-260 (FVIRMSPVTVPVLIAGILTCL), 305-325 (VLVGVWLIAGLALHLASVGLV), 359-379 (LAVFFAVVAVIIDQHLFAPVI), 391-411 (LVIFYIANGLLSMVSDNVFVG), 449-469 (ATPNGQAAFLFLLTSALAPLI), and 476-496 (MVWMALPYTIVLSVVGVLAIE).

Belongs to the NhaB Na(+)/H(+) (TC 2.A.34) antiporter family.

The protein resides in the cell inner membrane. It carries out the reaction 2 Na(+)(in) + 3 H(+)(out) = 2 Na(+)(out) + 3 H(+)(in). Na(+)/H(+) antiporter that extrudes sodium in exchange for external protons. The sequence is that of Na(+)/H(+) antiporter NhaB from Shewanella putrefaciens (strain CN-32 / ATCC BAA-453).